The following is a 678-amino-acid chain: Penicillin-binding protein activator LpoA (678 aa).

Residues methionine 1–glycine 26 form the signal peptide. The N-palmitoyl cysteine moiety is linked to residue cysteine 27. Residue cysteine 27 is the site of S-diacylglycerol cysteine attachment. 3 stretches are compositionally biased toward low complexity: residues alanine 300–glutamine 310, glutamine 330–alanine 340, and threonine 513–phenylalanine 528. Disordered stretches follow at residues alanine 300–alanine 340 and alanine 496–phenylalanine 528.

This sequence belongs to the LpoA family. In terms of assembly, interacts with PBP1a.

It is found in the cell outer membrane. Its function is as follows. Regulator of peptidoglycan synthesis that is essential for the function of penicillin-binding protein 1A (PBP1a). This is Penicillin-binding protein activator LpoA from Shigella flexneri serotype 5b (strain 8401).